We begin with the raw amino-acid sequence, 323 residues long: Aspartate carbamoyltransferase catalytic subunit (323 aa).

Residues R71 and T72 each coordinate carbamoyl phosphate. K99 lines the L-aspartate pocket. Carbamoyl phosphate is bound by residues R121, H151, and Q154. Residues R184 and R239 each contribute to the L-aspartate site. Residues G280 and P281 each contribute to the carbamoyl phosphate site.

The protein belongs to the aspartate/ornithine carbamoyltransferase superfamily. ATCase family. As to quaternary structure, heterododecamer (2C3:3R2) of six catalytic PyrB chains organized as two trimers (C3), and six regulatory PyrI chains organized as three dimers (R2).

It catalyses the reaction carbamoyl phosphate + L-aspartate = N-carbamoyl-L-aspartate + phosphate + H(+). Its pathway is pyrimidine metabolism; UMP biosynthesis via de novo pathway; (S)-dihydroorotate from bicarbonate: step 2/3. Its function is as follows. Catalyzes the condensation of carbamoyl phosphate and aspartate to form carbamoyl aspartate and inorganic phosphate, the committed step in the de novo pyrimidine nucleotide biosynthesis pathway. This is Aspartate carbamoyltransferase catalytic subunit from Cupriavidus pinatubonensis (strain JMP 134 / LMG 1197) (Cupriavidus necator (strain JMP 134)).